The primary structure comprises 577 residues: MHSTEVQAKPLFSWKALGWALLYFWFFSTLLQAIIYISGYSGTNGIRDSLLFSSLWLIPVFLFPKRIKIIAAVIGVVLWAASLAALCYYVIYGQEFSQSVLFVMFETNTNEASEYLSQYFSLKIVLIALAYTAVAVLLWTRLRPVYIPKPWRYVVSFALLYGLILHPIAMNTFIKNKPFEKTLDNLASRMEPAAPWQFLTGYYQYRQQLNSLTKLLNENNALPPLANFKDESGNEPRTLVLVIGESTQRGRMSLYGYPRETTPELDALHKTDPNLTVFNNVVTSRPYTIEILQQALTFANEKNPDLYLTQPSLMNMMKQAGYKTFWITNQQTMTARNTMLTVFSRQTDKQYYMNQQRTQSAREYDTNVLKPFQEVLNDPAPKKLIIVHLLGTHIKYKYRYPENQGKFDGNTDHVPPGLNAEELESYNDYDNANLYNDHVVASLIKDFKAANPNGFLVYFSDHGEEVYDTPPHKTQGRNEDNPTRHMYTIPFLLWTSEKWQATHPRDFSQDVDRKYSLAELIHTWSDLAGLSYDGYDPTRSVVNPQFKETTRWIGNPYKKNALIDYDTLPYGDQVGNQ.

5 helical membrane-spanning segments follow: residues 17 to 37, 44 to 64, 69 to 89, 119 to 139, and 154 to 174; these read LGWALLYFWFFSTLLQAIIYI, NGIRDSLLFSSLWLIPVFLFP, IIAAVIGVVLWAASLAALCYY, YFSLKIVLIALAYTAVAVLLW, and VVSFALLYGLILHPIAMNTFI.

This sequence belongs to the phosphoethanolamine transferase family. EptC/CptA subfamily. Forms a complex with an unidentified protein of approximately 36 kDa.

It is found in the cell inner membrane. It functions in the pathway bacterial outer membrane biogenesis; LPS core biosynthesis. Functionally, catalyzes the addition of a phosphoethanolamine moiety to the outer membrane lipopolysaccharide core. The chain is Phosphoethanolamine transferase EptC (eptC) from Escherichia coli (strain K12).